A 383-amino-acid chain; its full sequence is Queuine tRNA-ribosyltransferase (383 aa).

D92 functions as the Proton acceptor in the catalytic mechanism. Substrate is bound by residues 92–96 (DSGGF), D146, Q190, and G217. An RNA binding region spans residues 248–254 (GVGKPED). D267 functions as the Nucleophile in the catalytic mechanism. The segment at 272 to 276 (TRNAR) is RNA binding; important for wobble base 34 recognition. Residues C310, C312, C315, and H341 each contribute to the Zn(2+) site.

It belongs to the queuine tRNA-ribosyltransferase family. Homodimer. Within each dimer, one monomer is responsible for RNA recognition and catalysis, while the other monomer binds to the replacement base PreQ1. Requires Zn(2+) as cofactor.

The enzyme catalyses 7-aminomethyl-7-carbaguanine + guanosine(34) in tRNA = 7-aminomethyl-7-carbaguanosine(34) in tRNA + guanine. It participates in tRNA modification; tRNA-queuosine biosynthesis. Catalyzes the base-exchange of a guanine (G) residue with the queuine precursor 7-aminomethyl-7-deazaguanine (PreQ1) at position 34 (anticodon wobble position) in tRNAs with GU(N) anticodons (tRNA-Asp, -Asn, -His and -Tyr). Catalysis occurs through a double-displacement mechanism. The nucleophile active site attacks the C1' of nucleotide 34 to detach the guanine base from the RNA, forming a covalent enzyme-RNA intermediate. The proton acceptor active site deprotonates the incoming PreQ1, allowing a nucleophilic attack on the C1' of the ribose to form the product. After dissociation, two additional enzymatic reactions on the tRNA convert PreQ1 to queuine (Q), resulting in the hypermodified nucleoside queuosine (7-(((4,5-cis-dihydroxy-2-cyclopenten-1-yl)amino)methyl)-7-deazaguanosine). The sequence is that of Queuine tRNA-ribosyltransferase from Psychrobacter sp. (strain PRwf-1).